A 296-amino-acid polypeptide reads, in one-letter code: NADH-cytochrome b5 reductase 2-A (296 aa).

Residues 15–35 form a helical membrane-spanning segment; it reads FVIGAPTIALCSYYYSSGAFL. Residues 47 to 151 form the FAD-binding FR-type domain; it reads NNWIDLPISR…KGPIPKWKWV (105 aa). 154–189 is an FAD binding site; that stretch reads SFESITLIGGGTGITPLYQLIHAITKNPNDKTKIRL.

It belongs to the flavoprotein pyridine nucleotide cytochrome reductase family. Requires FAD as cofactor.

It is found in the mitochondrion outer membrane. The catalysed reaction is 2 Fe(III)-[cytochrome b5] + NADH = 2 Fe(II)-[cytochrome b5] + NAD(+) + H(+). May mediate the reduction of outer membrane cytochrome b5. The sequence is that of NADH-cytochrome b5 reductase 2-A (MCR1A) from Vanderwaltozyma polyspora (strain ATCC 22028 / DSM 70294 / BCRC 21397 / CBS 2163 / NBRC 10782 / NRRL Y-8283 / UCD 57-17) (Kluyveromyces polysporus).